A 556-amino-acid chain; its full sequence is MSMLKDPSQKYRPFSAINLPDRTWPSKTITEVPIWCSSDLRDGNQSLIEPMDAAKKMRFFKTLVQVGLKQIEVAFPSASDTDFNFVRELIEGNHIPDDVTIQVLTQAREDLITRTFESLRGAKKAIVHVYNATAPSFRRIVFNQDKQGVVDIATNAAKLIKKLAAEQPETQWSFQYSPEIFSSTELEFSVEVCNAVIDVWQPTPDNKIILNLPATVECATPNVYADQIEWFGRHVDKRDSVIISLHTHNDRGTGVAATELGLMAGADRVEGCLFGNGERTGNVDLVTLALNMYTQGLHPQLDFSDIDAVRKVVEECNQLPVHPRHPYVGDLVHTAFSGSHQDAIRKGFAQQKEDAIWEVPYLPIDPADIGRDYEAVIRVNSQSGKGGITFLLEQEYGISLPRRMQIEFSQVVQGETDRLGLEMTAQQIYSLLENEYLKATSPYVLASHRLQEENGTSAVDLEVSFDGEKQHWRGIGKGPLEALVAALPVKAEIMDYHEHAIGAGANAKAAAYIEIRLEGQRPLHGIGIDENITTASFRALFSALNRAVTQAEAKAA.

The Pyruvate carboxyltransferase domain maps to 33 to 307; that stretch reads PIWCSSDLRD…HPQLDFSDID (275 aa). 4 residues coordinate Mg(2+): D42, H246, H248, and N282. The segment at 439 to 556 is regulatory domain; that stretch reads ATSPYVLASH…AVTQAEAKAA (118 aa).

Belongs to the alpha-IPM synthase/homocitrate synthase family. LeuA type 2 subfamily. In terms of assembly, homodimer. The cofactor is Mg(2+).

The protein localises to the cytoplasm. It catalyses the reaction 3-methyl-2-oxobutanoate + acetyl-CoA + H2O = (2S)-2-isopropylmalate + CoA + H(+). The protein operates within amino-acid biosynthesis; L-leucine biosynthesis; L-leucine from 3-methyl-2-oxobutanoate: step 1/4. Functionally, catalyzes the condensation of the acetyl group of acetyl-CoA with 3-methyl-2-oxobutanoate (2-ketoisovalerate) to form 3-carboxy-3-hydroxy-4-methylpentanoate (2-isopropylmalate). This is 2-isopropylmalate synthase from Pseudomonas aeruginosa (strain ATCC 15692 / DSM 22644 / CIP 104116 / JCM 14847 / LMG 12228 / 1C / PRS 101 / PAO1).